We begin with the raw amino-acid sequence, 256 residues long: Pimeloyl-[acyl-carrier protein] methyl ester esterase (256 aa).

The AB hydrolase-1 domain maps to 15–242 (HLVLLHGWGL…AAHAPFISHP (228 aa)). Substrate contacts are provided by residues Trp22, 82-83 (SL), and 143-147 (FLALQ). Ser82 serves as the catalytic Nucleophile. Active-site residues include Asp207 and His235. A substrate-binding site is contributed by His235.

The protein belongs to the AB hydrolase superfamily. Carboxylesterase BioH family. As to quaternary structure, monomer.

The protein resides in the cytoplasm. The enzyme catalyses 6-carboxyhexanoyl-[ACP] methyl ester + H2O = 6-carboxyhexanoyl-[ACP] + methanol + H(+). It functions in the pathway cofactor biosynthesis; biotin biosynthesis. The physiological role of BioH is to remove the methyl group introduced by BioC when the pimeloyl moiety is complete. It allows to synthesize pimeloyl-ACP via the fatty acid synthetic pathway through the hydrolysis of the ester bonds of pimeloyl-ACP esters. This chain is Pimeloyl-[acyl-carrier protein] methyl ester esterase, found in Shigella boydii serotype 18 (strain CDC 3083-94 / BS512).